A 225-amino-acid polypeptide reads, in one-letter code: Cytidylate kinase (225 aa).

12–20 (GPSGAGKGT) lines the ATP pocket.

The protein belongs to the cytidylate kinase family. Type 1 subfamily.

It is found in the cytoplasm. The enzyme catalyses CMP + ATP = CDP + ADP. It carries out the reaction dCMP + ATP = dCDP + ADP. This is Cytidylate kinase from Edwardsiella ictaluri (strain 93-146).